The following is a 251-amino-acid chain: MTEPTVGSTDAELLAEPRLVVEPGVAARVSAVAGPVLQGMGYRLVRIRISGEAGCTVQIMAERPDGSMQIEDCEAISRALSPVLDVADPIDRAYRLEISSPGIDRPLVRRSDFERYAGHLVKVEMAVAHEGRKRFRGMIGAVEGDRVHLQRDDVKAGEERNVLLTMEDISEARLVLTDELIAESMRRGKAAAREMRRNLGLEPPAAPHAKISEKTTKNTKPKKKPAPTNTKKHRLAAERARRGEIEPDEGD.

Residues 198 to 251 are disordered; sequence NLGLEPPAAPHAKISEKTTKNTKPKKKPAPTNTKKHRLAAERARRGEIEPDEGD. Over residues 217 to 234 the composition is skewed to basic residues; sequence KNTKPKKKPAPTNTKKHR. Residues 235–245 are compositionally biased toward basic and acidic residues; the sequence is LAAERARRGEI.

Belongs to the RimP family.

It is found in the cytoplasm. Functionally, required for maturation of 30S ribosomal subunits. The polypeptide is Ribosome maturation factor RimP (Bradyrhizobium diazoefficiens (strain JCM 10833 / BCRC 13528 / IAM 13628 / NBRC 14792 / USDA 110)).